A 449-amino-acid chain; its full sequence is Maturation protein A (449 aa).

Belongs to the Leviviricetes maturation protein family. Interacts with the host pilus.

The protein localises to the virion. Functionally, the maturation protein is required for the typical attachment of the phage to the side of the bacterial F-pili. Binds to sequences located toward each end of the genome, hence circularizing it. The RNA genome-maturation protein A complex is released from the capsid upon host receptor binding. Maturation protein A enters the cell along with the viral RNA. This is Maturation protein A from Pseudomonas aeruginosa (Bacteriophage PP7).